The primary structure comprises 306 residues: Replication termination factor 2 (306 aa).

The segment at 192 to 306 (RAKLEKKTKK…HWVTHTSYCF (115 aa)) is disordered. A compositionally biased stretch (basic and acidic residues) spans 226-240 (GKSEEADPDPREKKS). S287 carries the phosphoserine modification.

The protein belongs to the rtf2 family. Interacts with DDI2; probably also interacts with DDI1. In terms of processing, undergoes proteasomal degradation, via DDI1 and DDI2. Removal from stalled replisomes and degradation are required for genome stability.

It is found in the chromosome. Its function is as follows. Replication termination factor which is a component of the elongating replisome. Required for ATR pathway signaling upon DNA damage and has a positive activity during DNA replication. Might function to facilitate fork pausing at replication fork barriers like the rDNA. May be globally required to stimulate ATR signaling after the fork stalls or encounters a lesion. Interacts with nascent DNA. The polypeptide is Replication termination factor 2 (Rattus norvegicus (Rat)).